A 511-amino-acid polypeptide reads, in one-letter code: Piperic acid synthase CYP719A37 (511 aa).

A helical transmembrane segment spans residues 7 to 27 (VDPALFSAFVSIIFFFLGMFL). Residue Cys-455 participates in heme binding.

The protein belongs to the cytochrome P450 family. Heme serves as cofactor. Specifically expressed in immature fruits and roots. Barely detectable in young leaves and flowering spadices.

The protein resides in the membrane. Its subcellular location is the endoplasmic reticulum membrane. It carries out the reaction (E,E)-feruperate + reduced [NADPH--hemoprotein reductase] + O2 = (E,E)-piperate + oxidized [NADPH--hemoprotein reductase] + 2 H2O + H(+). The protein operates within aromatic compound metabolism. Cytochrome P450 monooxygenase involved in the biosynthesis of aromatic piperamides natural products such as piperine (1-piperoyl-piperidine), the pungent principle contributing, together with several terpenoids, to the aromatic properties of black pepper fruits, and displaying numerous pharmacological activities such as antiproliferative, antitumor, antiangiogenesis, antioxidant, antidiabetic, antiobesity, cardioprotective, antimicrobial, antiaging, and immunomodulatory effects. Catalyzes the conversion of feruperic acid (5-(4-hydroxy-3-methoxyphenyl)-2,4-pentadienoic acid) to piperic acid. Inactive toward ferulic acid and feruperine. The protein is Piperic acid synthase CYP719A37 of Piper nigrum (Black pepper).